Consider the following 176-residue polypeptide: Cytochrome b (176 aa).

The next 3 membrane-spanning stretches (helical) occupy residues F33–M53, W77–V98, and W113–L133. Heme b-binding residues include H83 and H97.

This sequence belongs to the cytochrome b family. As to quaternary structure, the cytochrome bc1 complex contains 11 subunits: 3 respiratory subunits (MT-CYB, CYC1 and UQCRFS1), 2 core proteins (UQCRC1 and UQCRC2) and 6 low-molecular weight proteins (UQCRH/QCR6, UQCRB/QCR7, UQCRQ/QCR8, UQCR10/QCR9, UQCR11/QCR10 and a cleavage product of UQCRFS1). This cytochrome bc1 complex then forms a dimer. It depends on heme b as a cofactor.

It localises to the mitochondrion inner membrane. Functionally, component of the ubiquinol-cytochrome c reductase complex (complex III or cytochrome b-c1 complex) that is part of the mitochondrial respiratory chain. The b-c1 complex mediates electron transfer from ubiquinol to cytochrome c. Contributes to the generation of a proton gradient across the mitochondrial membrane that is then used for ATP synthesis. This chain is Cytochrome b (MT-CYB), found in Tomopeas ravum (Blunt-eared bat).